Here is a 409-residue protein sequence, read N- to C-terminus: Probable type I inositol 1,4,5-trisphosphate 5-phosphatase (409 aa).

It belongs to the inositol 1,4,5-trisphosphate 5-phosphatase type I family.

The enzyme catalyses 1D-myo-inositol 1,4,5-trisphosphate + H2O = 1D-myo-inositol 1,4-bisphosphate + phosphate. It carries out the reaction 1D-myo-inositol 1,3,4,5-tetrakisphosphate + H2O = 1D-myo-inositol 1,3,4-trisphosphate + phosphate. This chain is Probable type I inositol 1,4,5-trisphosphate 5-phosphatase (ipp-5), found in Caenorhabditis elegans.